Here is a 338-residue protein sequence, read N- to C-terminus: Fructose-1,6-bisphosphatase class 1 (338 aa).

Glu-94, Asp-116, Leu-118, and Asp-119 together coordinate Mg(2+). Substrate contacts are provided by residues Asp-119–Ser-122, Asn-210, and Lys-276. Glu-282 provides a ligand contact to Mg(2+).

It belongs to the FBPase class 1 family. As to quaternary structure, homotetramer. The cofactor is Mg(2+).

The protein resides in the cytoplasm. It catalyses the reaction beta-D-fructose 1,6-bisphosphate + H2O = beta-D-fructose 6-phosphate + phosphate. The protein operates within carbohydrate biosynthesis; gluconeogenesis. In Burkholderia thailandensis (strain ATCC 700388 / DSM 13276 / CCUG 48851 / CIP 106301 / E264), this protein is Fructose-1,6-bisphosphatase class 1.